The chain runs to 502 residues: Maturase K (502 aa).

The protein belongs to the intron maturase 2 family. MatK subfamily.

Its subcellular location is the plastid. The protein localises to the chloroplast. Functionally, usually encoded in the trnK tRNA gene intron. Probably assists in splicing its own and other chloroplast group II introns. The polypeptide is Maturase K (Brassica campestris (Field mustard)).